Consider the following 258-residue polypeptide: Axonemal dynein light intermediate polypeptide 1 (258 aa).

Disordered regions lie at residues 1–60 (MIPP…CVPD) and 202–231 (DLER…EEKK). Residues 176–255 (MRKALQAEQG…LKAQLEGIIA (80 aa)) are a coiled coil.

The protein belongs to the inner dynein arm light chain family. As to quaternary structure, interacts with CFAP45. Interacts with DYNC1H1.

The protein resides in the cell projection. Its subcellular location is the cilium. It is found in the flagellum. It localises to the dynein axonemal particle. The protein localises to the cytoplasm. Functionally, involved in sperm flagellum assembly. The sequence is that of Axonemal dynein light intermediate polypeptide 1 from Rattus norvegicus (Rat).